The following is a 562-amino-acid chain: NAD-dependent malic enzyme (562 aa).

Y101 functions as the Proton donor in the catalytic mechanism. R154 lines the NAD(+) pocket. The Proton acceptor role is filled by K172. 3 residues coordinate a divalent metal cation: E243, D244, and D267. Residues D267 and N415 each contribute to the NAD(+) site.

This sequence belongs to the malic enzymes family. In terms of assembly, homotetramer. Mg(2+) serves as cofactor. Requires Mn(2+) as cofactor.

The catalysed reaction is (S)-malate + NAD(+) = pyruvate + CO2 + NADH. It catalyses the reaction oxaloacetate + H(+) = pyruvate + CO2. The sequence is that of NAD-dependent malic enzyme from Shewanella denitrificans (strain OS217 / ATCC BAA-1090 / DSM 15013).